The sequence spans 245 residues: Tryptophan synthase alpha chain (245 aa).

Catalysis depends on proton acceptor residues Glu-35 and Asp-46.

It belongs to the TrpA family. Tetramer of two alpha and two beta chains.

The enzyme catalyses (1S,2R)-1-C-(indol-3-yl)glycerol 3-phosphate + L-serine = D-glyceraldehyde 3-phosphate + L-tryptophan + H2O. It functions in the pathway amino-acid biosynthesis; L-tryptophan biosynthesis; L-tryptophan from chorismate: step 5/5. Its function is as follows. The alpha subunit is responsible for the aldol cleavage of indoleglycerol phosphate to indole and glyceraldehyde 3-phosphate. This is Tryptophan synthase alpha chain from Sulfurisphaera tokodaii (strain DSM 16993 / JCM 10545 / NBRC 100140 / 7) (Sulfolobus tokodaii).